The chain runs to 120 residues: Large ribosomal subunit protein uL18 (120 aa).

It belongs to the universal ribosomal protein uL18 family. As to quaternary structure, part of the 50S ribosomal subunit; part of the 5S rRNA/L5/L18/L25 subcomplex. Contacts the 5S and 23S rRNAs.

This is one of the proteins that bind and probably mediate the attachment of the 5S RNA into the large ribosomal subunit, where it forms part of the central protuberance. The protein is Large ribosomal subunit protein uL18 of Paramagnetospirillum magneticum (strain ATCC 700264 / AMB-1) (Magnetospirillum magneticum).